Consider the following 66-residue polypeptide: Defensin-B1 (66 aa).

An N-terminal signal peptide occupies residues Met1–Gly23. Disulfide bonds link Cys29-Cys56, Cys36-Cys50, and Cys40-Cys57. A propeptide spanning residues Val61–Gly66 is cleaved from the precursor.

Belongs to the beta-defensin family. In terms of tissue distribution, expressed at low levels in kidney, lung, and spleen.

It localises to the secreted. Functionally, has bactericidal activity. May act as a ligand for C-C chemokine receptor CCR6. Positively regulates the sperm motility and bactericidal activity in a CCR6-dependent manner. Binds to CCR6 and triggers Ca2+ mobilization in the sperm which is important for its motility. The polypeptide is Defensin-B1 (Ornithorhynchus anatinus (Duckbill platypus)).